The chain runs to 137 residues: Nucleoside diphosphate kinase (137 aa).

ATP-binding residues include Lys-9, Phe-57, Arg-85, Thr-91, Arg-102, and Asn-112. His-115 functions as the Pros-phosphohistidine intermediate in the catalytic mechanism.

Belongs to the NDK family. In terms of assembly, homotetramer. It depends on Mg(2+) as a cofactor.

The protein localises to the cytoplasm. It catalyses the reaction a 2'-deoxyribonucleoside 5'-diphosphate + ATP = a 2'-deoxyribonucleoside 5'-triphosphate + ADP. It carries out the reaction a ribonucleoside 5'-diphosphate + ATP = a ribonucleoside 5'-triphosphate + ADP. Its function is as follows. Major role in the synthesis of nucleoside triphosphates other than ATP. The ATP gamma phosphate is transferred to the NDP beta phosphate via a ping-pong mechanism, using a phosphorylated active-site intermediate. This Thermus thermophilus (strain ATCC BAA-163 / DSM 7039 / HB27) protein is Nucleoside diphosphate kinase.